The following is a 269-amino-acid chain: Ubiquinone/menaquinone biosynthesis C-methyltransferase UbiE (269 aa).

S-adenosyl-L-methionine-binding positions include Thr-92, Asp-113, and Asn-141 to Ala-142.

The protein belongs to the class I-like SAM-binding methyltransferase superfamily. MenG/UbiE family.

The enzyme catalyses a 2-demethylmenaquinol + S-adenosyl-L-methionine = a menaquinol + S-adenosyl-L-homocysteine + H(+). It carries out the reaction a 2-methoxy-6-(all-trans-polyprenyl)benzene-1,4-diol + S-adenosyl-L-methionine = a 5-methoxy-2-methyl-3-(all-trans-polyprenyl)benzene-1,4-diol + S-adenosyl-L-homocysteine + H(+). Its pathway is quinol/quinone metabolism; menaquinone biosynthesis; menaquinol from 1,4-dihydroxy-2-naphthoate: step 2/2. It participates in cofactor biosynthesis; ubiquinone biosynthesis. Functionally, methyltransferase required for the conversion of demethylmenaquinol (DMKH2) to menaquinol (MKH2) and the conversion of 2-polyprenyl-6-methoxy-1,4-benzoquinol (DDMQH2) to 2-polyprenyl-3-methyl-6-methoxy-1,4-benzoquinol (DMQH2). The sequence is that of Ubiquinone/menaquinone biosynthesis C-methyltransferase UbiE from Brucella suis biovar 1 (strain 1330).